A 287-amino-acid chain; its full sequence is DDRGK domain-containing protein 1 (287 aa).

Residues 1–5 (MDLIL) lie on the Lumenal side of the membrane. The chain crosses the membrane as a helical span at residues 6 to 26 (LLGIAVALLVILVTLFFFTKG). The Cytoplasmic portion of the chain corresponds to 27–287 (KGSQESGKYN…LINLVPVSAE (261 aa)). Disordered stretches follow at residues 28–102 (GSQE…KRAK) and 135–164 (KVEA…RQEH). Residues 44 to 68 (AQAAPRRAQVVRNQRNRARVAAAPA) are compositionally biased toward low complexity. The span at 85–102 (IPHADFNGEKMGAKKRAK) shows a compositional bias: basic and acidic residues.

The protein belongs to the DDRGK1 family. In terms of assembly, interacts with Atg9; the interaction is transient.

The protein resides in the endoplasmic reticulum membrane. Substrate adapter for ufmylation, the covalent attachment of the ubiquitin-like modifier UFM1 to substrate proteins. Required for ufmylation of Atg9; protects the nervous system during aging, possibly by stabilizing Atg9 and supporting its function. The protein is DDRGK domain-containing protein 1 of Culex quinquefasciatus (Southern house mosquito).